The chain runs to 379 residues: Cytochrome b (379 aa).

A run of 4 helical transmembrane segments spans residues Y34–M54, W78–A99, W114–L134, and F179–M199. The heme b site is built by H84 and H98. Residues H183 and H197 each coordinate heme b. An a ubiquinone-binding site is contributed by H202. The next 4 helical transmembrane spans lie at I227 to E247, L289 to S309, L321 to G341, and I349 to I369.

It belongs to the cytochrome b family. In terms of assembly, the main subunits of complex b-c1 are: cytochrome b, cytochrome c1 and the Rieske protein. Heme b serves as cofactor.

Its subcellular location is the mitochondrion inner membrane. Its function is as follows. Component of the ubiquinol-cytochrome c reductase complex (complex III or cytochrome b-c1 complex) that is part of the mitochondrial respiratory chain. The b-c1 complex mediates electron transfer from ubiquinol to cytochrome c. Contributes to the generation of a proton gradient across the mitochondrial membrane that is then used for ATP synthesis. The polypeptide is Cytochrome b (MT-CYB) (Lumbricus terrestris (Common earthworm)).